The following is a 91-amino-acid chain: Large ribosomal subunit protein bL28 (91 aa).

The disordered stretch occupies residues 1-23; the sequence is MSRVCELTGKGPMSGNNVSHANN.

Belongs to the bacterial ribosomal protein bL28 family.

This is Large ribosomal subunit protein bL28 from Paracoccus denitrificans (strain Pd 1222).